The sequence spans 336 residues: D-alanine--D-alanine ligase (336 aa).

Positions lysine 124–asparagine 330 constitute an ATP-grasp domain. Alanine 154–glutamate 209 provides a ligand contact to ATP. 3 residues coordinate Mg(2+): aspartate 284, glutamate 297, and asparagine 299.

This sequence belongs to the D-alanine--D-alanine ligase family. Mg(2+) serves as cofactor. Mn(2+) is required as a cofactor.

It is found in the cytoplasm. It catalyses the reaction 2 D-alanine + ATP = D-alanyl-D-alanine + ADP + phosphate + H(+). The protein operates within cell wall biogenesis; peptidoglycan biosynthesis. In terms of biological role, cell wall formation. In Shewanella sp. (strain ANA-3), this protein is D-alanine--D-alanine ligase.